Reading from the N-terminus, the 376-residue chain is Succinyl-diaminopimelate desuccinylase (376 aa).

Histidine 66 lines the Zn(2+) pocket. Aspartate 68 is a catalytic residue. Aspartate 99 provides a ligand contact to Zn(2+). The active-site Proton acceptor is glutamate 133. Residues glutamate 134, glutamate 162, and histidine 348 each contribute to the Zn(2+) site.

It belongs to the peptidase M20A family. DapE subfamily. Homodimer. It depends on Zn(2+) as a cofactor. The cofactor is Co(2+).

It catalyses the reaction N-succinyl-(2S,6S)-2,6-diaminopimelate + H2O = (2S,6S)-2,6-diaminopimelate + succinate. It participates in amino-acid biosynthesis; L-lysine biosynthesis via DAP pathway; LL-2,6-diaminopimelate from (S)-tetrahydrodipicolinate (succinylase route): step 3/3. Functionally, catalyzes the hydrolysis of N-succinyl-L,L-diaminopimelic acid (SDAP), forming succinate and LL-2,6-diaminopimelate (DAP), an intermediate involved in the bacterial biosynthesis of lysine and meso-diaminopimelic acid, an essential component of bacterial cell walls. In Xanthomonas euvesicatoria pv. vesicatoria (strain 85-10) (Xanthomonas campestris pv. vesicatoria), this protein is Succinyl-diaminopimelate desuccinylase.